The sequence spans 433 residues: Homogentisate 1,2-dioxygenase (433 aa).

The active-site Proton acceptor is His-288. Positions 331 and 337 each coordinate Fe cation. Homogentisate contacts are provided by Tyr-346 and His-367. A Fe cation-binding site is contributed by His-367.

It belongs to the homogentisate dioxygenase family. As to quaternary structure, hexamer; dimer of trimers. It depends on Fe cation as a cofactor.

It catalyses the reaction homogentisate + O2 = 4-maleylacetoacetate + H(+). It participates in amino-acid degradation; L-phenylalanine degradation; acetoacetate and fumarate from L-phenylalanine: step 4/6. Its function is as follows. Involved in the catabolism of homogentisate (2,5-dihydroxyphenylacetate or 2,5-OH-PhAc), a central intermediate in the degradation of phenylalanine and tyrosine. Catalyzes the oxidative ring cleavage of the aromatic ring of homogentisate to yield maleylacetoacetate. The sequence is that of Homogentisate 1,2-dioxygenase from Pseudomonas putida (strain GB-1).